Consider the following 535-residue polypeptide: Alpha-1,3-mannosyl-glycoprotein 4-beta-N-acetylglucosaminyltransferase A (535 aa).

Over 1-4 (MRLR) the chain is Cytoplasmic. The helical; Signal-anchor for type II membrane protein transmembrane segment at 5-27 (NGTVATALAFITSFLTLSWYTTW) threads the bilayer. Residues 28–63 (QNGKEKLIAYQREFLALKERLRIAEHRISQRSSELN) adopt a coiled-coil conformation. Over 28 to 535 (QNGKEKLIAY…NEIHIKKATN (508 aa)) the chain is Lumenal. N77 and N458 each carry an N-linked (GlcNAc...) asparagine glycan. A Phosphoserine modification is found at S474.

Belongs to the glycosyltransferase 54 family. Requires a divalent metal cation as cofactor. N-glycosylated.

Its subcellular location is the golgi apparatus membrane. The protein resides in the secreted. It carries out the reaction N(4)-{beta-D-GlcNAc-(1-&gt;2)-alpha-D-Man-(1-&gt;3)-[beta-D-GlcNAc-(1-&gt;2)-alpha-D-Man-(1-&gt;6)]-beta-D-Man-(1-&gt;4)-beta-D-GlcNAc-(1-&gt;4)-beta-D-GlcNAc}-L-asparaginyl-[protein] + UDP-N-acetyl-alpha-D-glucosamine = N(4)-{beta-D-GlcNAc-(1-&gt;2)-[beta-D-GlcNAc-(1-&gt;4)]-alpha-D-Man-(1-&gt;3)-[beta-D-GlcNAc-(1-&gt;2)-alpha-D-Man-(1-&gt;6)]-beta-D-Man-(1-&gt;4)-beta-D-GlcNAc-(1-&gt;4)-beta-D-GlcNAc}-L-asparaginyl-[protein] + UDP + H(+). The catalysed reaction is an N(4)-{beta-D-GlcNAc-(1-&gt;2)-alpha-D-Man-(1-&gt;3)-[alpha-D-Man-(1-&gt;6)]-beta-D-Man-(1-&gt;4)-beta-D-GlcNAc-(1-&gt;4)-beta-D-GlcNAc}-L-asparaginyl-[protein] + UDP-N-acetyl-alpha-D-glucosamine = an N(4)-{beta-D-GlcNAc-(1-&gt;2)-[beta-D-GlcNAc-(1-&gt;4)]-alpha-D-Man-(1-&gt;3)-[alpha-D-Man-(1-&gt;6)]-beta-D-Man-(1-&gt;4)-beta-D-GlcNAc-(1-&gt;4)-beta-D-GlcNAc}-L-asparaginyl-[protein] + UDP + H(+). The enzyme catalyses an N(4)-{beta-D-GlcNAc-(1-&gt;2)-alpha-D-Man-(1-&gt;3)-[beta-D-GlcNAc-(1-&gt;2)-[beta-D-GlcNAc-(1-&gt;6)]-alpha-D-Man-(1-&gt;6)]-beta-D-Man-(1-&gt;4)-beta-D-GlcNAc-(1-&gt;4)-beta-D-GlcNAc}-L-asparaginyl-[protein] + UDP-N-acetyl-alpha-D-glucosamine = an N(4)-{beta-D-GlcNAc-(1-&gt;2)-[beta-D-GlcNAc-(1-&gt;4)]-alpha-D-Man-(1-&gt;3)-[beta-D-GlcNAc-(1-&gt;2)-[beta-D-GlcNAc-(1-&gt;6)]-alpha-D-Man-(1-&gt;6)]-beta-D-Man-(1-&gt;4)-beta-D-GlcNAc-(1-&gt;4)-beta-D-GlcNAc}-L-asparaginyl-[protein] + UDP + H(+). It catalyses the reaction an N(4)-{beta-D-GlcNAc-(1-&gt;2)-alpha-D-Man-(1-&gt;3)-[beta-D-GlcNAc-(1-&gt;2)-alpha-D-Man-(1-&gt;6)]-beta-D-Man-(1-&gt;4)-beta-D-GlcNAc-(1-&gt;4)-[alpha-L-Fuc-(1-&gt;6)]-beta-D-GlcNAc}-L-asparaginyl-[protein] + UDP-N-acetyl-alpha-D-glucosamine = N(4)-{beta-D-GlcNAc-(1-&gt;2)-[beta-D-GlcNAc-(1-&gt;4)]-alpha-D-Man-(1-&gt;3)-[beta-D-GlcNAc-(1-&gt;2)-alpha-D-Man-(1-&gt;6)]-beta-D-Man-(1-&gt;4)-beta-D-GlcNAc-(1-&gt;4)-[alpha-L-Fuc-(1-&gt;6)]-beta-D-GlcNAc}-asparaginyl-[protein] + UDP + H(+). It carries out the reaction an N(4)-{beta-D-GlcNAc-(1-&gt;2)-alpha-D-Man-(1-&gt;3)-[beta-D-Gal-(1-&gt;4)-beta-D-GlcNAc-(1-&gt;2)-alpha-D-Man-(1-&gt;6)]-beta-D-Man-(1-&gt;4)-beta-D-GlcNAc-(1-&gt;4)-beta-D-GlcNAc}-L-asparaginyl-[protein] + UDP-N-acetyl-alpha-D-glucosamine = an N(4)-{beta-D-GlcNAc-(1-&gt;2)-[beta-D-GlcNAc-(1-&gt;4)]-alpha-D-Man-(1-&gt;3)-[beta-D-Gal-(1-&gt;4)-beta-D-GlcNAc-(1-&gt;2)-alpha-D-Man-(1-&gt;6)]-beta-D-Man-(1-&gt;4)-beta-D-GlcNAc-(1-&gt;4)-beta-D-GlcNAc}-L-asparaginyl-[protein] + UDP + H(+). The catalysed reaction is N(4)-{beta-D-GlcNAc-(1-&gt;2)-alpha-D-Man-(1-&gt;3)-[alpha-D-Man-(1-&gt;3)-{alpha-D-Man-(1-&gt;6)}-alpha-D-Man-(1-&gt;6)]-beta-D-Man-(1-&gt;4)-beta-D-GlcNAc-(1-&gt;4)-beta-D-GlcNAc}-asparaginyl-[protein] + UDP-N-acetyl-alpha-D-glucosamine = N(4)-{beta-D-GlcNAc-(1-&gt;2)-[beta-D-GlcNAc-(1-&gt;4)]-alpha-D-Man-(1-&gt;3)-[alpha-D-Man-(1-&gt;3)-{alpha-D-Man-(1-&gt;6)}-alpha-D-Man-(1-&gt;6)]-beta-D-Man-(1-&gt;4)-beta-D-GlcNAc-(1-&gt;4)-beta-D-GlcNAc}-asparaginyl-[protein] + UDP + H(+). The enzyme catalyses N(4)-{beta-D-GlcNAc-(1-&gt;2)-alpha-D-Man-(1-&gt;3)-beta-D-Man-(1-&gt;4)-beta-D-GlcNAc-(1-&gt;4)-beta-D-GlcNAc}-asparaginyl-[protein] + UDP-N-acetyl-alpha-D-glucosamine = N(4)-{beta-D-GlcNAc-(1-&gt;2)-[beta-D-GlcNAc-(1-&gt;4)]-alpha-D-Man-(1-&gt;3)-beta-D-Man-(1-&gt;4)-beta-D-GlcNAc-(1-&gt;4)-beta-D-GlcNAc}-asparaginyl-[protein] + UDP + H(+). It participates in protein modification; protein glycosylation. With respect to regulation, inhibited by UDP. In terms of biological role, glycosyltransferase that catalyze the transfer of GlcNAc from UDP-GlcNAc to the GlcNAcbeta1-2Manalpha1-3 arm of the core structure of N-linked glycans through a beta1-4 linkage and participates in the production of tri- and tetra-antennary N-linked sugar chains. Involved in glucose transport by mediating SLC2A2/GLUT2 glycosylation, thereby controlling cell-surface expression of SLC2A2 in pancreatic beta cells. This chain is Alpha-1,3-mannosyl-glycoprotein 4-beta-N-acetylglucosaminyltransferase A, found in Pongo abelii (Sumatran orangutan).